The chain runs to 217 residues: Acyl-homoserine-lactone synthase (217 aa).

The protein belongs to the autoinducer synthase family.

It carries out the reaction a fatty acyl-[ACP] + S-adenosyl-L-methionine = an N-acyl-L-homoserine lactone + S-methyl-5'-thioadenosine + holo-[ACP] + H(+). Required for the synthesis of OHHL (N-(3-oxohexanoyl)-L-homoserine lactone), an autoinducer molecule which binds to ExpR and thus acts in virulence (soft rot disease) through the activation of genes for plant tissue macerating enzymes. This Pectobacterium parmentieri protein is Acyl-homoserine-lactone synthase (expI).